Here is a 671-residue protein sequence, read N- to C-terminus: Bifunctional acetylxylan esterase/xylanase XynS20E (671 aa).

The signal sequence occupies residues 1 to 19; sequence MRLGVALSTIAVLLTATSA. An acetylxylan esterase region spans residues 54-279; the sequence is QGAGRDIHVY…IQDIWDFVSQ (226 aa). Catalysis depends on Ser152, which acts as the Charge relay system. Asn238 carries an N-linked (GlcNAc...) asparagine glycan. The segment at 285–328 is disordered; that stretch reads PVSASGNGGGNTTPTNPSTGGNGNGNGGGNTTPTNPSTGGNGNG. Gly residues predominate over residues 304 to 314; sequence GGNGNGNGGGN. 2 CBM10 domains span residues 335–374 and 383–422; these read KCSS…CGCG and TCSA…CGCG. N-linked (GlcNAc...) asparagine glycosylation occurs at Asn339. Residues Asn445 and Asn483 are each glycosylated (N-linked (GlcNAc...) asparagine). The region spanning 461–661 is the GH11 domain; the sequence is TVTSNKVGDI…NNGGTSGTAD (201 aa). Glu555 serves as the catalytic Nucleophile. Glu648 serves as the catalytic Proton donor.

It in the N-terminal section; belongs to the axeA family. The protein in the C-terminal section; belongs to the glycosyl hydrolase 11 (cellulase G) family.

It is found in the secreted. It carries out the reaction Deacetylation of xylans and xylo-oligosaccharides.. It catalyses the reaction Endohydrolysis of (1-&gt;4)-beta-D-xylosidic linkages in xylans.. It functions in the pathway glycan degradation; xylan degradation. Bifunctional acetylxylan esterase/xylanase involved in the hydrolysis of xylan, a major structural heterogeneous polysaccharide found in plant biomass representing the second most abundant polysaccharide in the biosphere, after cellulose. Degrades xylan from acetylxylan, beechwood, birchwood, and oat spelt, and releases acetate from 4-methylumbelliferyl acetate and beta-D-xylose tetraacetate. No activity is observed against carboxy methyl cellulose, beta-glucan, p-nitrophenol acetate, p-nitrophenol laurate, p-nitrophenol myristate, p-nitrophenol, palmitate, or beta-naphthol acetate. In Neocallimastix patriciarum (Rumen fungus), this protein is Bifunctional acetylxylan esterase/xylanase XynS20E (xynS20E).